Reading from the N-terminus, the 1199-residue chain is Chromosome partition protein Smc (1199 aa).

Residue 32–39 (PNGSGKSN) coordinates ATP. The stretch at 192 to 528 (GVAEFDEKSE…NARIKTLKDM (337 aa)) forms a coiled coil. Residues 546 to 658 (PGVVDIAGNL…VDNLENAKKL (113 aa)) enclose the SMC hinge domain. Residues 691-1051 (IKVDIDMKKL…YLQLISEVQK (361 aa)) adopt a coiled-coil conformation.

This sequence belongs to the SMC family. As to quaternary structure, homodimer.

The protein localises to the cytoplasm. Functionally, required for chromosome condensation and partitioning. This is Chromosome partition protein Smc from Methanococcus voltae.